The following is a 276-amino-acid chain: Orotidine 5'-phosphate decarboxylase (276 aa).

Lysine 96 (proton donor) is an active-site residue.

This sequence belongs to the OMP decarboxylase family. Type 2 subfamily.

It carries out the reaction orotidine 5'-phosphate + H(+) = UMP + CO2. Its pathway is pyrimidine metabolism; UMP biosynthesis via de novo pathway; UMP from orotate: step 2/2. The chain is Orotidine 5'-phosphate decarboxylase from Porphyromonas gingivalis (strain ATCC 33277 / DSM 20709 / CIP 103683 / JCM 12257 / NCTC 11834 / 2561).